The chain runs to 80 residues: Ubiquitin-like protein NEDD8-like protein 2 (80 aa).

This sequence belongs to the ubiquitin family.

In Dictyostelium discoideum (Social amoeba), this protein is Ubiquitin-like protein NEDD8-like protein 2 (nedd8l2).